The primary structure comprises 402 residues: Serine/threonine transporter SstT (402 aa).

8 consecutive transmembrane segments (helical) span residues 17 to 37 (IAIG…ITVI), 44 to 64 (FVGG…ANAL), 78 to 98 (IIVL…ISHY), 138 to 158 (ALSQ…GFAM), 179 to 199 (IVRW…FDTI), 212 to 232 (VLIL…NPII), 295 to 315 (MAGA…TLGI), and 336 to 356 (ASGI…LFGI).

This sequence belongs to the dicarboxylate/amino acid:cation symporter (DAACS) (TC 2.A.23) family.

It is found in the cell membrane. It carries out the reaction L-serine(in) + Na(+)(in) = L-serine(out) + Na(+)(out). It catalyses the reaction L-threonine(in) + Na(+)(in) = L-threonine(out) + Na(+)(out). Its function is as follows. Involved in the import of serine and threonine into the cell, with the concomitant import of sodium (symport system). This Streptococcus thermophilus (strain ATCC BAA-250 / LMG 18311) protein is Serine/threonine transporter SstT.